Consider the following 309-residue polypeptide: Sulfate adenylyltransferase subunit 2 (309 aa).

The protein belongs to the PAPS reductase family. CysD subfamily. In terms of assembly, heterodimer composed of CysD, the smaller subunit, and CysN.

It catalyses the reaction sulfate + ATP + H(+) = adenosine 5'-phosphosulfate + diphosphate. The protein operates within sulfur metabolism; hydrogen sulfide biosynthesis; sulfite from sulfate: step 1/3. In terms of biological role, with CysN forms the ATP sulfurylase (ATPS) that catalyzes the adenylation of sulfate producing adenosine 5'-phosphosulfate (APS) and diphosphate, the first enzymatic step in sulfur assimilation pathway. APS synthesis involves the formation of a high-energy phosphoric-sulfuric acid anhydride bond driven by GTP hydrolysis by CysN coupled to ATP hydrolysis by CysD. This chain is Sulfate adenylyltransferase subunit 2, found in Methylorubrum populi (strain ATCC BAA-705 / NCIMB 13946 / BJ001) (Methylobacterium populi).